The following is a 146-amino-acid chain: MKFFTVLLFASLAATSLAAVPGSKDELHLRTQPTDAIPASQFTPSSHISKESTSSKDLSKESFIFNEELVSEDNVGTESTKPQSQEAQDGLRSGSSQQEETTSAATSEGKLTMLSQAVQKELGKVIEGFISGVEDIISGASGTVRP.

The signal sequence occupies residues 1 to 19; sequence MKFFTVLLFASLAATSLAA. Positions 25–112 are disordered; that stretch reads DELHLRTQPT…SAATSEGKLT (88 aa). Basic and acidic residues predominate over residues 48 to 60; it reads ISKESTSSKDLSK. Residues serine 54, serine 59, and serine 71 each carry the phosphoserine modification. Residues 74-106 show a composition bias toward polar residues; it reads NVGTESTKPQSQEAQDGLRSGSSQQEETTSAAT.

This sequence belongs to the PP3/GlyCAM-1 family. Post-translationally, extensively O-glycosylated. Lymph nodes. Associated with the lumenal surface of the high endothelial venules of peripheral lymph nodes.

The protein resides in the cell membrane. Adhesion molecule that accomplishes cell binding by presenting carbohydrate(s) to the lectin domain of L-selectin. The chain is Glycosylation-dependent cell adhesion molecule 1 (Glycam1) from Rattus norvegicus (Rat).